The chain runs to 235 residues: FsC-acetyl coenzyme A-N(2)-transacetylase (235 aa).

One can recognise an N-acetyltransferase domain in the interval 14 to 190; it reads LELVPLGHEH…RYSITREEWL (177 aa). CoA is bound by residues 106–108, Gly-114, Asn-146, and 151–153; these read FRV and AVM.

The protein operates within siderophore biosynthesis. Functionally, fsC-acetyl coenzyme A-N(2)-transacetylase; part of the siderophore biosynthetic pathway. Aspergillus fumigatus produces 4 types of siderophores, low-molecular-mass iron chelators, including excreted fusarinine C (FsC) and triacetylfusarinine C (TAFC) for iron uptake and intacellular ferricrocin (FC) for hyphal and hydroxyferricrocin (HFC) for conidial iron distribution and storage. TAFC consists of 3 N(2)-acetyl-N(5)-anhydromevalonyl-N(5)-hydroxyornithine residues cyclically linked by ester bonds; FC is a cyclic hexapeptide with the structure Gly-Ser-Gly-(N(5)-acetyl-N(5)-hydroxyornithine)x3. The biosynthesis of all four siderophores depends on the hydroxylation of ornithine, catalyzed by the monooxygenase sidA. Subsequently, the pathways for biosynthesis of extra- and intracellular siderophores split. For biosynthesis of extracellular siderophores, the transacylase sidF transfers anhydromevalonyl to N(5)-hydroxyornithine. The required anhydromevalonyl-CoA moiety is derived from mevalonate by CoA ligation and dehydration catalyzed by sidI and sidH respectively. The acetylation of N(5)-hydroxyornithine for FC biosynthesis involves the constitutively expressed sidL. FC is hydroxylated to HFC by an as yet uncharacterized enzyme during conidiation. Assembly of fusarinine C (FsC) and FC is catalyzed by two different nonribosomal peptide synthetases (NRPS), sidD and sidC respectively. Subsequently, sidG catalyzes N2-acetylation of FsC for forming TAFC. Both extra- and intracellular siderophores are crucial for growth during iron limitation and virulence. The protein is FsC-acetyl coenzyme A-N(2)-transacetylase of Aspergillus fumigatus (strain ATCC MYA-4609 / CBS 101355 / FGSC A1100 / Af293) (Neosartorya fumigata).